A 118-amino-acid chain; its full sequence is uncharacterized protein (118 aa).

Residues 1–18 (MSKLIFLFVVATLATIKA) form the signal peptide. N24 is a glycosylation site (N-linked (GlcNAc...) asparagine; by host).

This is an uncharacterized protein from Magallana gigas (Pacific oyster).